A 122-amino-acid polypeptide reads, in one-letter code: Ribonuclease P protein component (122 aa).

It belongs to the RnpA family. In terms of assembly, consists of a catalytic RNA component (M1 or rnpB) and a protein subunit.

It catalyses the reaction Endonucleolytic cleavage of RNA, removing 5'-extranucleotides from tRNA precursor.. Functionally, RNaseP catalyzes the removal of the 5'-leader sequence from pre-tRNA to produce the mature 5'-terminus. It can also cleave other RNA substrates such as 4.5S RNA. The protein component plays an auxiliary but essential role in vivo by binding to the 5'-leader sequence and broadening the substrate specificity of the ribozyme. This chain is Ribonuclease P protein component, found in Oenococcus oeni (strain ATCC BAA-331 / PSU-1).